Consider the following 183-residue polypeptide: Ribosome-recycling factor (183 aa).

The protein belongs to the RRF family.

The protein localises to the cytoplasm. Responsible for the release of ribosomes from messenger RNA at the termination of protein biosynthesis. May increase the efficiency of translation by recycling ribosomes from one round of translation to another. The protein is Ribosome-recycling factor of Afipia carboxidovorans (strain ATCC 49405 / DSM 1227 / KCTC 32145 / OM5) (Oligotropha carboxidovorans).